A 1132-amino-acid polypeptide reads, in one-letter code: MIPVQVGKKIRYSYAKFPEILELPYLIEIQKKSYQWFLDEGLREVFREISPITDFTGNLSLEFLDYYLGKPKYSVEECKERDFTYSAPLRVKVRLLNKETGEIKEQEVFLGDFPLMTEKGTFIFNGAERVVISQMVRSPGVYFSEQVDPNGKKMYLATIIPNRGAWLEFETDVNDHIYVRIDRTRKLPVTVLLKALGYESKGRIAELFDHDDKIIATLERDNTDSREEALIEIYKKLRPGEPPTVESAKTLLDSMFFDPKRYDLGNVGRYKLFKKLNHGVLYRYLEEDGEKEYDKYLNDYVPVKREFIRELTNEDIIYTIRYLLGLMRGQGKVDDIDHLGNRRLRSVGELLQNQFRIGLARMERVVRERMTIQDADSLTPQVLINTRPIVAAIKEFFGSSQLSQFMDQTNPLAELTHKRRLSALGPGGLSRERAGFEVRDVHHSHYGRMCPIETPEGPNIGLIGNLTTYARVNEFGFIETPYRKVDKERGVVTNEIVYLTADEEEKYIIAQANVRLSPEGKFLDEMVNARHGSEILHVEPSKVDFVDVSPKQVFSVATSLIPFLEHDDANRALMGANMQRQAVPLIRTEAPVVGTGIEYKAAKDSGVVVLAKNPGVVERVTADEIVIRNDQGQIDRYKLIKFQRSNQGTCINQKPIVRKGERVEKDQIIADGPSTDHGELALGKNVLVAYMPWEGYNYEDAILISEKLVKEDVFTSIHIEEYECDARDTKLGPEEITRDIPNVGEDALKDLDERGIIRIGAEVRPGDILVGKVTPKGETELTAEERLLRAIFGEKAREVRDTSLRVPHGESGKVVDVKVFSRENGDELSPGVNMLVRVYIAQKRKISVGDKMAGRHGNKGVVARILPEEDMPFLPDGTPVEIVLNPLGVPSRMNIGQILECHLGWAAKALGINVATPIFNGATEEDIFEALRKAGLPEDGKIEVRDGRTGEPFDSRVTVGYVYMLKLAHLVDDKIHARSTGPYSLVTQQPLGGKAQFGGQRFGEMEVWALEAYGAAYTLQEILTIKSDDVVGRVKTYEAIVKGENIPEPGVPESFKVLIKELQSLGLDVKVLTDNDEEVEIKEIDDDIGEKAEEYGLAASIADRDEVKNEYYEEEVEADFEINDDFDGDLED.

Belongs to the RNA polymerase beta chain family. The RNAP catalytic core consists of 2 alpha, 1 beta, 1 beta' and 1 omega subunit. When a sigma factor is associated with the core the holoenzyme is formed, which can initiate transcription.

It catalyses the reaction RNA(n) + a ribonucleoside 5'-triphosphate = RNA(n+1) + diphosphate. Its function is as follows. DNA-dependent RNA polymerase catalyzes the transcription of DNA into RNA using the four ribonucleoside triphosphates as substrates. The protein is DNA-directed RNA polymerase subunit beta of Carboxydothermus hydrogenoformans (strain ATCC BAA-161 / DSM 6008 / Z-2901).